A 330-amino-acid chain; its full sequence is Ketol-acid reductoisomerase (NADP(+)) (330 aa).

The region spanning 1–181 is the KARI N-terminal Rossmann domain; it reads MKVFYDSDFK…GLSRAGVIQT (181 aa). Residues 24–27, R47, S52, and 82–85 each bind NADP(+); these read YGSQ and DELQ. Residue H107 is part of the active site. NADP(+) is bound at residue G133. A KARI C-terminal knotted domain is found at 182–327; it reads TFKEETETDL…AKLRKMCGLE (146 aa). D190, E194, E226, and E230 together coordinate Mg(2+). S251 serves as a coordination point for substrate.

Belongs to the ketol-acid reductoisomerase family. Requires Mg(2+) as cofactor.

It carries out the reaction (2R)-2,3-dihydroxy-3-methylbutanoate + NADP(+) = (2S)-2-acetolactate + NADPH + H(+). The enzyme catalyses (2R,3R)-2,3-dihydroxy-3-methylpentanoate + NADP(+) = (S)-2-ethyl-2-hydroxy-3-oxobutanoate + NADPH + H(+). Its pathway is amino-acid biosynthesis; L-isoleucine biosynthesis; L-isoleucine from 2-oxobutanoate: step 2/4. It functions in the pathway amino-acid biosynthesis; L-valine biosynthesis; L-valine from pyruvate: step 2/4. In terms of biological role, involved in the biosynthesis of branched-chain amino acids (BCAA). Catalyzes an alkyl-migration followed by a ketol-acid reduction of (S)-2-acetolactate (S2AL) to yield (R)-2,3-dihydroxy-isovalerate. In the isomerase reaction, S2AL is rearranged via a Mg-dependent methyl migration to produce 3-hydroxy-3-methyl-2-ketobutyrate (HMKB). In the reductase reaction, this 2-ketoacid undergoes a metal-dependent reduction by NADPH to yield (R)-2,3-dihydroxy-isovalerate. This chain is Ketol-acid reductoisomerase (NADP(+)), found in Methanococcus maripaludis (strain DSM 14266 / JCM 13030 / NBRC 101832 / S2 / LL).